We begin with the raw amino-acid sequence, 160 residues long: Transcriptional repressor NrdR (160 aa).

Polar residues predominate over residues 1–11 (MRCPNCNSLDT). Residues 1-20 (MRCPNCNSLDTQVKDSRPTE) are disordered. Residues 3 to 34 (CPNCNSLDTQVKDSRPTEDSSVIRRRRVCIAC) fold into a zinc finger. The 91-residue stretch at 49-139 (LTVIKRNGRR…VYRNFREAKD (91 aa)) folds into the ATP-cone domain.

This sequence belongs to the NrdR family. It depends on Zn(2+) as a cofactor.

Its function is as follows. Negatively regulates transcription of bacterial ribonucleotide reductase nrd genes and operons by binding to NrdR-boxes. The sequence is that of Transcriptional repressor NrdR from Rhodopseudomonas palustris (strain HaA2).